Here is a 1158-residue protein sequence, read N- to C-terminus: ATP-dependent helicase/deoxyribonuclease subunit B (1158 aa).

The region spanning 1–275 (MTLHAYLGRA…QYFNQLYRFN (275 aa)) is the UvrD-like helicase ATP-binding domain. An ATP-binding site is contributed by 8–15 (GRAGTGKS). The UvrD-like helicase C-terminal domain maps to 269–583 (NQLYRFNNQD…SIGTMDLAKV (315 aa)). [4Fe-4S] cluster contacts are provided by Cys784, Cys1112, Cys1115, and Cys1121.

It belongs to the helicase family. AddB/RexB type 1 subfamily. As to quaternary structure, heterodimer of AddA and AddB. Mg(2+) is required as a cofactor. The cofactor is [4Fe-4S] cluster.

Its function is as follows. The heterodimer acts as both an ATP-dependent DNA helicase and an ATP-dependent, dual-direction single-stranded exonuclease. Recognizes the chi site generating a DNA molecule suitable for the initiation of homologous recombination. The AddB subunit has 5' -&gt; 3' nuclease activity but not helicase activity. This Staphylococcus aureus (strain USA300) protein is ATP-dependent helicase/deoxyribonuclease subunit B.